Reading from the N-terminus, the 351-residue chain is uncharacterized protein (351 aa).

Residues D215, D226, H290, E319, and E333 each coordinate Mn(2+).

It belongs to the peptidase M24B family. Mn(2+) serves as cofactor.

This is an uncharacterized protein from Staphylococcus epidermidis (strain ATCC 35984 / DSM 28319 / BCRC 17069 / CCUG 31568 / BM 3577 / RP62A).